We begin with the raw amino-acid sequence, 1377 residues long: DNA-directed RNA polymerase subunit beta' (1377 aa).

4 residues coordinate Zn(2+): Cys60, Cys62, Cys75, and Cys78. The Mg(2+) site is built by Asp449, Asp451, and Asp453. Zn(2+) contacts are provided by Cys777, Cys851, Cys858, and Cys861.

It belongs to the RNA polymerase beta' chain family. As to quaternary structure, the RNAP catalytic core consists of 2 alpha, 1 beta, 1 beta' and 1 omega subunit. When a sigma factor is associated with the core the holoenzyme is formed, which can initiate transcription. The cofactor is Mg(2+). Zn(2+) serves as cofactor.

The catalysed reaction is RNA(n) + a ribonucleoside 5'-triphosphate = RNA(n+1) + diphosphate. Functionally, DNA-dependent RNA polymerase catalyzes the transcription of DNA into RNA using the four ribonucleoside triphosphates as substrates. The polypeptide is DNA-directed RNA polymerase subunit beta' (Borreliella burgdorferi (strain ZS7) (Borrelia burgdorferi)).